The primary structure comprises 68 residues: MPQLDTSTWLITILSMILTLLIVFQLKISKFNYPLNPTMKNINKDLYTNPWETKWTKIYLPLSLPQQS.

Residues 8 to 24 (TWLITILSMILTLLIVF) form a helical membrane-spanning segment. Lys54 is subject to N6-acetyllysine; alternate. Lys54 is modified (N6-succinyllysine; alternate). Lys57 is subject to N6-acetyllysine.

Belongs to the ATPase protein 8 family. As to quaternary structure, component of the ATP synthase complex composed at least of ATP5F1A/subunit alpha, ATP5F1B/subunit beta, ATP5MC1/subunit c (homooctomer), MT-ATP6/subunit a, MT-ATP8/subunit 8, ATP5ME/subunit e, ATP5MF/subunit f, ATP5MG/subunit g, ATP5MK/subunit k, ATP5MJ/subunit j, ATP5F1C/subunit gamma, ATP5F1D/subunit delta, ATP5F1E/subunit epsilon, ATP5PF/subunit F6, ATP5PB/subunit b, ATP5PD/subunit d, ATP5PO/subunit OSCP. ATP synthase complex consists of a soluble F(1) head domain (subunits alpha(3) and beta(3)) - the catalytic core - and a membrane F(0) domain - the membrane proton channel (subunits c, a, 8, e, f, g, k and j). These two domains are linked by a central stalk (subunits gamma, delta, and epsilon) rotating inside the F1 region and a stationary peripheral stalk (subunits F6, b, d, and OSCP). Interacts with PRICKLE3.

It is found in the mitochondrion membrane. Functionally, subunit 8, of the mitochondrial membrane ATP synthase complex (F(1)F(0) ATP synthase or Complex V) that produces ATP from ADP in the presence of a proton gradient across the membrane which is generated by electron transport complexes of the respiratory chain. ATP synthase complex consist of a soluble F(1) head domain - the catalytic core - and a membrane F(1) domain - the membrane proton channel. These two domains are linked by a central stalk rotating inside the F(1) region and a stationary peripheral stalk. During catalysis, ATP synthesis in the catalytic domain of F(1) is coupled via a rotary mechanism of the central stalk subunits to proton translocation. In vivo, can only synthesize ATP although its ATP hydrolase activity can be activated artificially in vitro. Part of the complex F(0) domain. This chain is ATP synthase F(0) complex subunit 8, found in Lemur catta (Ring-tailed lemur).